The following is a 162-amino-acid chain: Probable E3 ubiquitin-protein ligase XERICO (162 aa).

Residues Gly-12–Val-28 form a helical membrane-spanning segment. The RING-type; atypical zinc-finger motif lies at Cys-103–Arg-145.

As to quaternary structure, interacts with UBC8 and TULP9. In terms of tissue distribution, ubiquitous. Higher expression in actively growing tissues.

The protein resides in the membrane. It catalyses the reaction S-ubiquitinyl-[E2 ubiquitin-conjugating enzyme]-L-cysteine + [acceptor protein]-L-lysine = [E2 ubiquitin-conjugating enzyme]-L-cysteine + N(6)-ubiquitinyl-[acceptor protein]-L-lysine.. Its pathway is protein modification; protein ubiquitination. Function on abscisic acid homeostasis at post-translational level, probably through ubiquitin/proteasome-dependent substrate-specific degradation. This is Probable E3 ubiquitin-protein ligase XERICO (XERICO) from Arabidopsis thaliana (Mouse-ear cress).